A 483-amino-acid chain; its full sequence is Cobyric acid synthase (483 aa).

Positions 251–438 (SLVVAVPMLP…LHGVFNADEF (188 aa)) constitute a GATase cobBQ-type domain. Cys333 (nucleophile) is an active-site residue. His430 is an active-site residue.

It belongs to the CobB/CobQ family. CobQ subfamily.

Its pathway is cofactor biosynthesis; adenosylcobalamin biosynthesis. Functionally, catalyzes amidations at positions B, D, E, and G on adenosylcobyrinic A,C-diamide. NH(2) groups are provided by glutamine, and one molecule of ATP is hydrogenolyzed for each amidation. This chain is Cobyric acid synthase, found in Brucella anthropi (strain ATCC 49188 / DSM 6882 / CCUG 24695 / JCM 21032 / LMG 3331 / NBRC 15819 / NCTC 12168 / Alc 37) (Ochrobactrum anthropi).